A 302-amino-acid chain; its full sequence is Succinate--CoA ligase [ADP-forming] subunit alpha (302 aa).

CoA-binding positions include 17–20 (TGST), Lys-43, and 96–98 (ITE). Tyr-159 is a binding site for substrate. The active-site Tele-phosphohistidine intermediate is His-247.

The protein belongs to the succinate/malate CoA ligase alpha subunit family. In terms of assembly, heterotetramer of two alpha and two beta subunits.

The enzyme catalyses succinate + ATP + CoA = succinyl-CoA + ADP + phosphate. It carries out the reaction GTP + succinate + CoA = succinyl-CoA + GDP + phosphate. Its pathway is carbohydrate metabolism; tricarboxylic acid cycle; succinate from succinyl-CoA (ligase route): step 1/1. Functionally, succinyl-CoA synthetase functions in the citric acid cycle (TCA), coupling the hydrolysis of succinyl-CoA to the synthesis of either ATP or GTP and thus represents the only step of substrate-level phosphorylation in the TCA. The alpha subunit of the enzyme binds the substrates coenzyme A and phosphate, while succinate binding and nucleotide specificity is provided by the beta subunit. The chain is Succinate--CoA ligase [ADP-forming] subunit alpha from Staphylococcus aureus (strain MSSA476).